The following is a 397-amino-acid chain: Riboflavin biosynthesis protein RibBA (397 aa).

The segment at 1-199 is DHBP synthase; it reads MFHRIEEALE…IEDLIAYRRH (199 aa). D-ribulose 5-phosphate is bound by residues 26–27, D31, 138–142, and E162; these read RE and RAGHT. A Mg(2+)-binding site is contributed by E27. A Mg(2+)-binding site is contributed by H141. The GTP cyclohydrolase II stretch occupies residues 200-397; the sequence is HETLVTREAE…VNKLGHLLNL (198 aa). 250-254 serves as a coordination point for GTP; the sequence is RVHSE. Residues C255, C266, and C268 each coordinate Zn(2+). Residues Q271, 293-295, and T315 each bind GTP; that span reads EGR. D327 serves as the catalytic Proton acceptor; for GTP cyclohydrolase activity. R329 acts as the Nucleophile; for GTP cyclohydrolase activity in catalysis. GTP-binding residues include T350 and K355.

This sequence in the N-terminal section; belongs to the DHBP synthase family. It in the C-terminal section; belongs to the GTP cyclohydrolase II family. It depends on Mg(2+) as a cofactor. Mn(2+) serves as cofactor. Requires Zn(2+) as cofactor.

The enzyme catalyses D-ribulose 5-phosphate = (2S)-2-hydroxy-3-oxobutyl phosphate + formate + H(+). The catalysed reaction is GTP + 4 H2O = 2,5-diamino-6-hydroxy-4-(5-phosphoribosylamino)-pyrimidine + formate + 2 phosphate + 3 H(+). It functions in the pathway cofactor biosynthesis; riboflavin biosynthesis; 2-hydroxy-3-oxobutyl phosphate from D-ribulose 5-phosphate: step 1/1. Its pathway is cofactor biosynthesis; riboflavin biosynthesis; 5-amino-6-(D-ribitylamino)uracil from GTP: step 1/4. Functionally, catalyzes the conversion of D-ribulose 5-phosphate to formate and 3,4-dihydroxy-2-butanone 4-phosphate. Catalyzes the conversion of GTP to 2,5-diamino-6-ribosylamino-4(3H)-pyrimidinone 5'-phosphate (DARP), formate and pyrophosphate. The sequence is that of Riboflavin biosynthesis protein RibBA from Bacillus cereus (strain ATCC 14579 / DSM 31 / CCUG 7414 / JCM 2152 / NBRC 15305 / NCIMB 9373 / NCTC 2599 / NRRL B-3711).